The primary structure comprises 430 residues: Histidinol dehydrogenase (430 aa).

Positions 129, 190, and 213 each coordinate NAD(+). Serine 236, glutamine 258, and histidine 261 together coordinate substrate. The Zn(2+) site is built by glutamine 258 and histidine 261. Active-site proton acceptor residues include glutamate 326 and histidine 327. Substrate contacts are provided by histidine 327, aspartate 360, glutamate 414, and histidine 419. Position 360 (aspartate 360) interacts with Zn(2+). Histidine 419 is a binding site for Zn(2+).

It belongs to the histidinol dehydrogenase family. Requires Zn(2+) as cofactor.

It carries out the reaction L-histidinol + 2 NAD(+) + H2O = L-histidine + 2 NADH + 3 H(+). Its pathway is amino-acid biosynthesis; L-histidine biosynthesis; L-histidine from 5-phospho-alpha-D-ribose 1-diphosphate: step 9/9. Its function is as follows. Catalyzes the sequential NAD-dependent oxidations of L-histidinol to L-histidinaldehyde and then to L-histidine. This is Histidinol dehydrogenase from Gluconobacter oxydans (strain 621H) (Gluconobacter suboxydans).